A 340-amino-acid polypeptide reads, in one-letter code: Glyceraldehyde-3-phosphate dehydrogenase (340 aa).

Residues 11-12 (TI) and Gly109 each bind NAD(+). Residue 138–140 (SCN) participates in D-glyceraldehyde 3-phosphate binding. Cys139 (nucleophile) is an active-site residue. Arg167 is a binding site for NAD(+). Residue 193 to 194 (HA) participates in D-glyceraldehyde 3-phosphate binding. Gln300 is a binding site for NAD(+).

This sequence belongs to the glyceraldehyde-3-phosphate dehydrogenase family. Homotetramer.

Its subcellular location is the cytoplasm. It catalyses the reaction D-glyceraldehyde 3-phosphate + phosphate + NADP(+) = (2R)-3-phospho-glyceroyl phosphate + NADPH + H(+). It carries out the reaction D-glyceraldehyde 3-phosphate + phosphate + NAD(+) = (2R)-3-phospho-glyceroyl phosphate + NADH + H(+). It participates in carbohydrate degradation; glycolysis; pyruvate from D-glyceraldehyde 3-phosphate: step 1/5. The sequence is that of Glyceraldehyde-3-phosphate dehydrogenase from Metallosphaera sedula (strain ATCC 51363 / DSM 5348 / JCM 9185 / NBRC 15509 / TH2).